A 218-amino-acid chain; its full sequence is Large ribosomal subunit protein mL54 (218 aa).

This sequence belongs to the mitochondrion-specific ribosomal protein mL54 family. As to quaternary structure, component of the mitochondrial large ribosomal subunit (mt-LSU). Mature N.crassa 74S mitochondrial ribosomes consist of a small (37S) and a large (54S) subunit. The 37S small subunit contains a 16S ribosomal RNA (16S mt-rRNA) and 32 different proteins. The 54S large subunit contains a 23S rRNA (23S mt-rRNA) and 42 different proteins.

Its subcellular location is the mitochondrion. Component of the mitochondrial ribosome (mitoribosome), a dedicated translation machinery responsible for the synthesis of mitochondrial genome-encoded proteins, including at least some of the essential transmembrane subunits of the mitochondrial respiratory chain. The mitoribosomes are attached to the mitochondrial inner membrane and translation products are cotranslationally integrated into the membrane. The polypeptide is Large ribosomal subunit protein mL54 (mrpl37) (Neurospora crassa (strain ATCC 24698 / 74-OR23-1A / CBS 708.71 / DSM 1257 / FGSC 987)).